The following is a 281-amino-acid chain: RNA polymerase sigma factor RpoH (281 aa).

Residues Leu52–Arg121 are sigma-70 factor domain-2. Positions Asp76 to Gln79 match the Interaction with polymerase core subunit RpoC motif. The interval Ala226–Ser277 is sigma-70 factor domain-4. Residues Leu250–Thr269 constitute a DNA-binding region (H-T-H motif).

This sequence belongs to the sigma-70 factor family. RpoH subfamily. In terms of assembly, interacts with the RNA polymerase core enzyme.

It localises to the cytoplasm. In terms of biological role, sigma factors are initiation factors that promote the attachment of RNA polymerase to specific initiation sites and are then released. This sigma factor is involved in regulation of expression of heat shock genes. In Haemophilus influenzae (strain ATCC 51907 / DSM 11121 / KW20 / Rd), this protein is RNA polymerase sigma factor RpoH.